The following is a 194-amino-acid chain: CDRRFSRSDELTRHIRIHTGQKPFQCRICMRNFSRSDHLTTHIRTHTGEKPFACDICGRKFARSDERKRHTKIHLRQKDKKVEKAASVSTTSSPVAAYSSSVATSYSSSIATTYPSPVRTVYSSPASSSYPSPAHTAFPSPSIATTYPSGTATFQTQVATSFPSPAVTNNFSSQVTSALSDMTSTFSPRTIEIC.

3 C2H2-type zinc fingers span residues 1–18 (CDRRFSRSDELTRHIRIH), 24–46 (FQCRICMRNFSRSDHLTTHIRTH), and 52–74 (FACDICGRKFARSDERKRHTKIH). The tract at residues 66 to 88 (ERKRHTKIHLRQKDKKVEKAASV) is disordered. Residues 69–79 (RHTKIHLRQKD) show a composition bias toward basic residues.

It belongs to the EGR C2H2-type zinc-finger protein family.

It is found in the nucleus. The protein resides in the cytoplasm. Functionally, transcriptional regulator. Recognizes and binds to the DNA sequence 5'-GCG(T/G)GGGCG-3'(EGR-site) in the promoter region of target genes. Binds double-stranded target DNA, irrespective of the cytosine methylation status. Regulates the transcription of numerous target genes, and thereby plays an important role in regulating the response to growth factors, DNA damage, and ischemia. Plays a role in the regulation of cell survival, proliferation and cell death. Mediates responses to ischemia and hypoxia; regulates the expression of proteins that are involved in inflammatory processes. Plays a role in regulating the expression of circadian clock genes. This is Early growth response protein 1 (EGR1) from Coturnix japonica (Japanese quail).